The chain runs to 434 residues: F-box/LRR-repeat protein 21 (434 aa).

One can recognise an F-box domain in the interval 39–85; it reads RLDWGSLPHRVVLCVFQYLPLIDRARASSVCRRWNEVFHIPDLWRKF. LRR repeat units lie at residues 140-165, 187-213, 214-239, 242-265, 322-347, 349-374, and 375-400; these read LVNC…SKSH, DTPV…KMSS, CPHV…ALNY, LSDE…RIDV, GRSV…VVCA, GIQV…GLSE, and CEVS…SIME.

In terms of assembly, part of the SCF (SKP1-CUL1-F-box) E3 ubiquitin-protein ligase complex SCF(FBXL21) composed of CUL1, SKP1, RBX1 and FBXL21. Interacts with CRY2. Interacts with CRY1. As to expression, expressed in the adenohypophysis, hypothalamus (especially in the suprachiasmatic nucleus or nuclei, SCN) and pineal, all neuroendocrine structures associated with timing and homeostasis.

The protein localises to the cytoplasm. It is found in the cytosol. Its subcellular location is the nucleus. It functions in the pathway protein modification; protein ubiquitination. Its function is as follows. Substrate-recognition component of the SCF(FBXL21) E3 ubiquitin ligase complex involved in circadian rhythm function. Plays a key role in the maintenance of both the speed and the robustness of the circadian clock oscillation. The SCF(FBXL21) complex mainly acts in the cytosol and mediates ubiquitination of CRY proteins (CRY1 and CRY2), leading to CRY proteins stabilization. The SCF(FBXL21) complex counteracts the activity of the SCF(FBXL3) complex and protects CRY proteins from degradation. Involved in the hypothalamic suprachiasmatic nucleus (SCN) clock regulating temporal organization of the daily activities. The sequence is that of F-box/LRR-repeat protein 21 (Fbxl21) from Ovis aries (Sheep).